A 615-amino-acid chain; its full sequence is 1-deoxy-D-xylulose-5-phosphate synthase (615 aa).

Residues H76 and 117 to 119 (GHS) each bind thiamine diphosphate. D148 is a Mg(2+) binding site. Thiamine diphosphate is bound by residues 149–150 (GA), N177, Y284, and E365. Residue N177 participates in Mg(2+) binding.

The protein belongs to the transketolase family. DXPS subfamily. Homodimer. The cofactor is Mg(2+). Thiamine diphosphate is required as a cofactor.

It catalyses the reaction D-glyceraldehyde 3-phosphate + pyruvate + H(+) = 1-deoxy-D-xylulose 5-phosphate + CO2. The protein operates within metabolic intermediate biosynthesis; 1-deoxy-D-xylulose 5-phosphate biosynthesis; 1-deoxy-D-xylulose 5-phosphate from D-glyceraldehyde 3-phosphate and pyruvate: step 1/1. Functionally, catalyzes the acyloin condensation reaction between C atoms 2 and 3 of pyruvate and glyceraldehyde 3-phosphate to yield 1-deoxy-D-xylulose-5-phosphate (DXP). The polypeptide is 1-deoxy-D-xylulose-5-phosphate synthase (Francisella tularensis subsp. mediasiatica (strain FSC147)).